A 794-amino-acid polypeptide reads, in one-letter code: Ubiquitin carboxyl-terminal hydrolase 10 (794 aa).

A2 carries the post-translational modification N-acetylalanine. Residues 2 to 99 are interaction with p53/TP53; that stretch reads ALHNPQYIFG…ILGCPTSKKT (98 aa). Residues 6 to 21 are G3BP1-binding; the sequence is PQYIFGDFSPDEFNQF. 2 positions are modified to phosphothreonine: T24 and T99. Positions 123-164 are disordered; the sequence is ESSSNAEAETLENDSGAGGLGQRERKKKKKRPPGYYSYLKDG. S209, S224, and S316 each carry phosphoserine. Positions 303-326 are disordered; it reads ESADLDPAKPESQSPPAESALSVS. Over residues 313–326 the composition is skewed to polar residues; sequence ESQSPPAESALSVS. Position 332 is a phosphoserine; by ATM (S332). S361 and S366 each carry phosphoserine. Residues 411–791 enclose the USP domain; it reads RGLINKGNWC…TAYLLYYRRV (381 aa). C420 (nucleophile) is an active-site residue. S543 is subject to Phosphoserine. Residues 546–588 are disordered; that stretch reads HEKHSVSNGPGSHLIEDEELEDTGEGSEDEWEQVGPKNKTSVT. Acidic residues predominate over residues 561–577; it reads EDEELEDTGEGSEDEWE. Position 568 is a phosphothreonine (T568). Position 572 is a phosphoserine (S572). H745 (proton acceptor) is an active-site residue.

It belongs to the peptidase C19 family. USP10 subfamily. In terms of assembly, found in a deubiquitination complex with TANK, USP10 and ZC3H12A; this complex inhibits genotoxic stress- or interleukin-1-beta (IL1B)-mediated NF-kappa-B activation by promoting IKBKG or TRAF6 deubiquitination. Interacts with IKBKG; this interaction increases in response to DNA damage. Interacts with TANK; this interaction increases in response to DNA damage. Interacts with TRAF6; this interaction increases in response to DNA damage. Interacts with ZC3H12A; this interaction increases in response to DNA damage. Interacts with G3BP1 (via NTF2 domain) and G3BP2 (via NTF2 domain); inhibiting stress granule formation. Post-translationally, phosphorylated by ATM following DNA damage, leading to stabilization and translocation it to the nucleus. In terms of processing, ubiquitinated. Deubiquitinated by USP13.

It localises to the cytoplasm. The protein localises to the nucleus. The protein resides in the early endosome. The catalysed reaction is Thiol-dependent hydrolysis of ester, thioester, amide, peptide and isopeptide bonds formed by the C-terminal Gly of ubiquitin (a 76-residue protein attached to proteins as an intracellular targeting signal).. With respect to regulation, specifically inhibited by spautin-1 (specific and potent autophagy inhibitor-1), a derivative of MBCQ that binds to USP10 and inhibits deubiquitinase activity. Regulated by PIK3C3/VPS34-containing complexes. Hydrolase that can remove conjugated ubiquitin from target proteins such as p53/TP53, RPS2/us5, RPS3/us3, RPS10/eS10, BECN1, SNX3 and CFTR. Acts as an essential regulator of p53/TP53 stability: in unstressed cells, specifically deubiquitinates p53/TP53 in the cytoplasm, leading to counteract MDM2 action and stabilize p53/TP53. Following DNA damage, translocates to the nucleus and deubiquitinates p53/TP53, leading to regulate the p53/TP53-dependent DNA damage response. Component of a regulatory loop that controls autophagy and p53/TP53 levels: mediates deubiquitination of BECN1, a key regulator of autophagy, leading to stabilize the PIK3C3/VPS34-containing complexes. In turn, PIK3C3/VPS34-containing complexes regulate USP10 stability, suggesting the existence of a regulatory system by which PIK3C3/VPS34-containing complexes regulate p53/TP53 protein levels via USP10 and USP13. Does not deubiquitinate MDM2. Plays a key role in 40S ribosome subunit recycling when a ribosome has stalled during translation: acts both by inhibiting formation of stress granules, which store stalled translation pre-initiation complexes, and mediating deubiquitination of 40S ribosome subunits. Acts as a negative regulator of stress granules formation by lowering G3BP1 and G3BP2 valence, thereby preventing G3BP1 and G3BP2 ability to undergo liquid-liquid phase separation (LLPS) and assembly of stress granules. Promotes 40S ribosome subunit recycling following ribosome dissociation in response to ribosome stalling by mediating deubiquitination of 40S ribosomal proteins RPS2/us5, RPS3/us3 and RPS10/eS10, thereby preventing their degradation by the proteasome. Part of a ribosome quality control that takes place when ribosomes have stalled during translation initiation (iRQC): USP10 acts by removing monoubiquitination of RPS2/us5 and RPS3/us3, promoting 40S ribosomal subunit recycling. Deubiquitinates CFTR in early endosomes, enhancing its endocytic recycling. Involved in a TANK-dependent negative feedback response to attenuate NF-kappa-B activation via deubiquitinating IKBKG or TRAF6 in response to interleukin-1-beta (IL1B) stimulation or upon DNA damage. Deubiquitinates TBX21 leading to its stabilization. Plays a negative role in the RLR signaling pathway upon RNA virus infection by blocking the RIGI-mediated MAVS activation. Mechanistically, removes the unanchored 'Lys-63'-linked polyubiquitin chains of MAVS to inhibit its aggregation, essential for its activation. The chain is Ubiquitin carboxyl-terminal hydrolase 10 (Usp10) from Rattus norvegicus (Rat).